Consider the following 584-residue polypeptide: HERV-H_2q24.3 provirus ancestral Env polyprotein (584 aa).

The signal sequence occupies residues 1-35 (MIFAGKAPSNTSTLMKFYSLLLYSLLFSFPFLCHP). The Extracellular segment spans residues 36–523 (LPLPSYLHHT…WALSNWMSWV (488 aa)). The N-linked (GlcNAc...) asparagine glycan is linked to N47. The CXXC motif lies at 64–67 (CWLC). 6 N-linked (GlcNAc...) asparagine glycosylation sites follow: N199, N222, N265, N283, N352, and N370. The fusion peptide stretch occupies residues 388–408 (VIPLIPLMVGLGLSASTVALG). A CKS-17 motif is present at residues 454–470 (LQNRRGLDLLTAEKGGL). A disulfide bridge links C471 with C478. A CX6CC motif is present at residues 471–479 (CIFLNEECC). The N-linked (GlcNAc...) asparagine glycan is linked to N483. Residues 524–544 (LPIVSPLIPIFLLLLFGPCIF) form a helical membrane-spanning segment. Residues 545 to 584 (RLVSQFIQNRIQAITNHSIRQMFLLTSPQYHPLPQDLPSA) are Cytoplasmic-facing.

This sequence belongs to the gamma type-C retroviral envelope protein family. HERV class-I H env subfamily. As to quaternary structure, the surface (SU) and transmembrane (TM) proteins form a heterodimer. SU and TM are attached by noncovalent interactions or by a labile interchain disulfide bond. Specific enzymatic cleavages in vivo yield the mature SU and TM proteins. Post-translationally, the CXXC motif is highly conserved across a broad range of retroviral envelope proteins. It is thought to participate in the formation of a labile disulfide bond possibly with the CX6CC motif present in the transmembrane protein. Isomerization of the intersubunit disulfide bond to an SU intrachain disulfide bond is thought to occur upon receptor recognition in order to allow membrane fusion. As to expression, low expression in skin and testis. No expression in several cell lines.

It localises to the virion. The protein localises to the cell membrane. Functionally, retroviral envelope proteins mediate receptor recognition and membrane fusion during early infection. Endogenous envelope proteins may have kept, lost or modified their original function during evolution. This endogenous envelope protein has lost its original fusogenic properties but has immunosuppressive properties in vivo. In terms of biological role, SU mediates receptor recognition. TM anchors the envelope heterodimer to the viral membrane through one transmembrane domain. The other hydrophobic domain, called fusion peptide, mediates fusion of the viral membrane with the target cell membrane. This chain is HERV-H_2q24.3 provirus ancestral Env polyprotein, found in Homo sapiens (Human).